The chain runs to 246 residues: Probable ABC transporter permease protein BMEII0107 (246 aa).

Helical transmembrane passes span 12–32 (LLSF…GAVV), 63–83 (VLSG…LMGW), 94–114 (WVQF…IVTL), 122–142 (IFVI…QGVI), 172–192 (VPFI…TVVA), and 211–231 (LYYD…LGLF). The ABC transmembrane type-1 domain maps to 56-236 (IFASLRRVLS…ILGLFMDRLL (181 aa)).

The protein belongs to the binding-protein-dependent transport system permease family. The complex is composed of two ATP-binding proteins (BMEII0108), two transmembrane proteins (BMEII0107) and a solute-binding protein (BMEII0109).

It is found in the cell inner membrane. In terms of biological role, probably part of an ABC transporter complex. Probably responsible for the translocation of the substrate across the membrane. The protein is Probable ABC transporter permease protein BMEII0107 of Brucella melitensis biotype 1 (strain ATCC 23456 / CCUG 17765 / NCTC 10094 / 16M).